We begin with the raw amino-acid sequence, 684 residues long: MKRSFDASHGQLEKQSRPRQVPTSCHFCRTKKLKCDRRFPCSNCRARRLSCVPFSDRSQAASLDLPGAGPSSTVSNEELSENINELKARLQRLEELISVNAEEKLDSKGPTSFVTSKGGYGEDVEASKSMNSLEMDAFEHQPLHSNSEERIAQLFASSFVSIIAPAIRLVIDQPTLSLLPSRKQAERLFDYFADQVVVFYYFIHVPTVRSMLDTVYTHLENKRQPQHDHLALLSTVFALSAYFGSSSSRFPFNGAEAKMLCYRWISVAQQALCAANYIVQPTVETLQSVILIAAYLVPNLGSMSIFRVLMASALQGALQLSLHQIDSPANQRRRQNATVNWVDIESKRRIWWHLASTDWIVSFMSGPRCGTYMIHPKQMTVDLPTNVDDQDIRPAGNYAQPLENAPTDMTFSILRTRISVIFREIVDAATDSGCLQEELPYDVVLAFDHRLHGIMADAPACFRTDPRSSRAPSRSPDLRLHRLIANALNRLHRPYLARGARDPKYSYSRMVCLRTARSVIELCKEMTGANEEFQHVKMWTIVHPLFNSVLVLVMDYCLNREEPRGDERKAEILEGFRLLEACQEDSALAQRGLQQMRQLLKGSASARKDKNPIHGDTDRATPPGSSNLPQHDKSSSSSPAPPVWPCLWTDPDLAPLETMDFDVDLDESQFEVLFRDFEGRHPMY.

Positions 25-51 (CHFCRTKKLKCDRRFPCSNCRARRLSC) form a DNA-binding region, zn(2)-C6 fungal-type. The stretch at 76 to 103 (NEELSENINELKARLQRLEELISVNAEE) forms a coiled coil. Residues 601-644 (KGSASARKDKNPIHGDTDRATPPGSSNLPQHDKSSSSSPAPPVW) are disordered. Basic and acidic residues predominate over residues 606 to 619 (ARKDKNPIHGDTDR).

Its subcellular location is the nucleus. Transcription factor that regulates the expression of the gene cluster that mediates the biosynthesis of agnestins, dihydroxy-xanthone metabolites. The chain is Agnestins biosynthesis cluster transcription factor AgnL11 from Paecilomyces divaricatus (Penicillium divaricatum).